The following is a 370-amino-acid chain: Histidinol-phosphate aminotransferase (370 aa).

At Lys-230 the chain carries N6-(pyridoxal phosphate)lysine.

It belongs to the class-II pyridoxal-phosphate-dependent aminotransferase family. Histidinol-phosphate aminotransferase subfamily. In terms of assembly, homodimer. It depends on pyridoxal 5'-phosphate as a cofactor.

It carries out the reaction L-histidinol phosphate + 2-oxoglutarate = 3-(imidazol-4-yl)-2-oxopropyl phosphate + L-glutamate. It participates in amino-acid biosynthesis; L-histidine biosynthesis; L-histidine from 5-phospho-alpha-D-ribose 1-diphosphate: step 7/9. The protein is Histidinol-phosphate aminotransferase of Leptospira interrogans serogroup Icterohaemorrhagiae serovar Lai (strain 56601).